Reading from the N-terminus, the 273-residue chain is R-spondin-3 (273 aa).

The first 21 residues, 1–21 (MHLRLISWFFIILNFMEYIGS), serve as a signal peptide directing secretion. 2 FU repeats span residues 35–86 (PNVS…GYYG) and 92–135 (INKC…GLEA). A glycan (N-linked (GlcNAc...) asparagine) is linked at asparagine 36. Disulfide bonds link cysteine 41/cysteine 48, cysteine 45/cysteine 54, cysteine 57/cysteine 76, cysteine 80/cysteine 95, cysteine 98/cysteine 105, cysteine 102/cysteine 111, cysteine 114/cysteine 125, cysteine 129/cysteine 142, cysteine 148/cysteine 190, cysteine 159/cysteine 166, and cysteine 199/cysteine 206. The region spanning 147–207 (HCEASEWSPW…KCTVQRKKCP (61 aa)) is the TSP type-1 domain. The tract at residues 201 to 273 (VQRKKCPKGE…QKSVSVSTVH (73 aa)) is disordered. Over residues 213–223 (RKGRERKRKKP) the composition is skewed to basic residues. Positions 224 to 252 (NKEESKDAIPDNKGLEPSRETPEQRENKQ) are enriched in basic and acidic residues.

The protein belongs to the R-spondin family. In terms of assembly, interacts with the extracellular domain of FZD8 and LRP6. It however does not form a ternary complex with FZD8 and LRP6. Interacts with WNT1. Binds heparin. Interacts with LGR4, LGR5 and LGR6.

The protein localises to the secreted. Activator of the canonical Wnt signaling pathway by acting as a ligand for LGR4-6 receptors, which acts as a key regulator of angiogenesis. Upon binding to LGR4-6 (LGR4, LGR5 or LGR6), LGR4-6 associate with phosphorylated LRP6 and frizzled receptors that are activated by extracellular Wnt receptors, triggering the canonical Wnt signaling pathway to increase expression of target genes. Also regulates the canonical Wnt/beta-catenin-dependent pathway and non-canonical Wnt signaling by acting as an inhibitor of ZNRF3, an important regulator of the Wnt signaling pathway. Acts as a ligand for frizzled FZD8 and LRP6. May negatively regulate the TGF-beta pathway. Acts as a key regulator of angiogenesis by controlling vascular stability and pruning: acts by activating the non-canonical Wnt signaling pathway in endothelial cells. Can also amplify Wnt signaling pathway independently of LGR4-6 receptors, possibly by acting as a direct antagonistic ligand to RNF43 and ZNRF3. The sequence is that of R-spondin-3 (RSPO3) from Bos taurus (Bovine).